We begin with the raw amino-acid sequence, 347 residues long: Heme A synthase (347 aa).

Helical transmembrane passes span 14–34, 96–116, 129–149, 162–182, 199–219, 260–280, 287–307, and 311–331; these read VKIW…IGGI, FHRL…LYFM, FILI…MVKS, LAMH…HFLL, VFYI…LVAG, FIHE…LLVL, MYLL…TFIY, and IILA…SIYL. Heme is bound at residue His262. Heme is bound at residue His317.

It belongs to the COX15/CtaA family. Type 2 subfamily. As to quaternary structure, interacts with CtaB. Heme b serves as cofactor.

The protein resides in the cell membrane. The enzyme catalyses Fe(II)-heme o + 2 A + H2O = Fe(II)-heme a + 2 AH2. The protein operates within porphyrin-containing compound metabolism; heme A biosynthesis; heme A from heme O: step 1/1. Catalyzes the conversion of heme O to heme A by two successive hydroxylations of the methyl group at C8. The first hydroxylation forms heme I, the second hydroxylation results in an unstable dihydroxymethyl group, which spontaneously dehydrates, resulting in the formyl group of heme A. This Ehrlichia ruminantium (strain Welgevonden) protein is Heme A synthase.